Reading from the N-terminus, the 172-residue chain is Scytalone dehydratase-like protein Arp1 (172 aa).

Y49 provides a ligand contact to substrate. Residues H84 and H109 contribute to the active site. Residue N130 participates in substrate binding.

It belongs to the scytalone dehydratase family. In terms of assembly, homotrimer. Each subunit contains an active site, located in the central part of the hydrophobic core of the monomer, which functions independently.

In terms of biological role, scytalone dehydratase-like protein; part of the Pks2 gene cluster that mediates the formation of infectious structures (appressoria), enabling these fungi to kill insects faster. The product of the Pks2 gene cluster is different from the one of Pks1 and has still not been identified. The sequence is that of Scytalone dehydratase-like protein Arp1 from Metarhizium robertsii (strain ARSEF 23 / ATCC MYA-3075) (Metarhizium anisopliae (strain ARSEF 23)).